The following is a 393-amino-acid chain: Phosphoglycerate kinase (393 aa).

Residues Asp21–Asn23, Arg36, His59–Arg62, Arg114, and Arg147 each bind substrate. Residues Lys198, Glu320, and Gly346 to Thr349 each bind ATP.

This sequence belongs to the phosphoglycerate kinase family. In terms of assembly, monomer.

The protein localises to the cytoplasm. The catalysed reaction is (2R)-3-phosphoglycerate + ATP = (2R)-3-phospho-glyceroyl phosphate + ADP. It participates in carbohydrate degradation; glycolysis; pyruvate from D-glyceraldehyde 3-phosphate: step 2/5. The sequence is that of Phosphoglycerate kinase from Thiobacillus denitrificans (strain ATCC 25259 / T1).